The primary structure comprises 448 residues: Trigger factor (448 aa).

Residues Ser-173–Pro-258 enclose the PPIase FKBP-type domain.

The protein belongs to the FKBP-type PPIase family. Tig subfamily.

It is found in the cytoplasm. It catalyses the reaction [protein]-peptidylproline (omega=180) = [protein]-peptidylproline (omega=0). Functionally, involved in protein export. Acts as a chaperone by maintaining the newly synthesized protein in an open conformation. Functions as a peptidyl-prolyl cis-trans isomerase. In Herminiimonas arsenicoxydans, this protein is Trigger factor.